The following is a 23-amino-acid chain: Conolysin-Mt1 (23 aa).

S22 is subject to Serine amide.

In terms of tissue distribution, expressed by the venom duct.

The protein localises to the secreted. Its function is as follows. This cytolytic peptide has ability to disrupt the integrity of cell membranes from both prokaryotes and eukaryotes. It permeabilizes both negatively charged prokaryotic (PE:PG) and zwitterionic eukaryotic (PC:cholesterol) model membranes. It has potent hemolytic activity on human erythrocytes and exhibits low antimicrobial activity against the Gram-negative bacterium E.coli (MIC&gt;50 uM) and the Gram-positive bacterium S.aureus (MIC=25-50 uM). Intracranial injection causes mice to shuffle backward until the encounter an obstacle, at which time the mouse jump into the air. The backward shuffle is reminiscent to the signature dance 'moonwalk' that gained widespread popularity after being performed by Michael Jackson. The polypeptide is Conolysin-Mt1 (Conus mustelinus (Weasel cone)).